We begin with the raw amino-acid sequence, 282 residues long: Aldo-keto reductase MUL_1987 (282 aa).

Y57 serves as the catalytic Proton donor. NADPH-binding residues include L197, I235, S238, T246, N247, and R273.

This sequence belongs to the aldo/keto reductase family.

The sequence is that of Aldo-keto reductase MUL_1987 from Mycobacterium ulcerans (strain Agy99).